A 440-amino-acid chain; its full sequence is tRNA(Ile)-lysidine synthase (440 aa).

25–30 (SGGVDS) contacts ATP.

The protein belongs to the tRNA(Ile)-lysidine synthase family.

It is found in the cytoplasm. The enzyme catalyses cytidine(34) in tRNA(Ile2) + L-lysine + ATP = lysidine(34) in tRNA(Ile2) + AMP + diphosphate + H(+). Functionally, ligates lysine onto the cytidine present at position 34 of the AUA codon-specific tRNA(Ile) that contains the anticodon CAU, in an ATP-dependent manner. Cytidine is converted to lysidine, thus changing the amino acid specificity of the tRNA from methionine to isoleucine. The polypeptide is tRNA(Ile)-lysidine synthase (Vibrio cholerae serotype O1 (strain ATCC 39315 / El Tor Inaba N16961)).